A 233-amino-acid chain; its full sequence is Orotate phosphoribosyltransferase (233 aa).

A 5-phospho-alpha-D-ribose 1-diphosphate-binding site is contributed by Lys-29. 37-38 contributes to the orotate binding site; that stretch reads FF. 5-phospho-alpha-D-ribose 1-diphosphate contacts are provided by residues 79–80, Arg-109, Lys-110, Lys-113, His-115, and 135–143; these read YK and DDVITAGTA. Residues Thr-139 and Arg-167 each contribute to the orotate site.

This sequence belongs to the purine/pyrimidine phosphoribosyltransferase family. PyrE subfamily. As to quaternary structure, homodimer.

The catalysed reaction is orotidine 5'-phosphate + diphosphate = orotate + 5-phospho-alpha-D-ribose 1-diphosphate. Its pathway is pyrimidine metabolism; UMP biosynthesis via de novo pathway; UMP from orotate: step 1/2. Functionally, catalyzes the transfer of a ribosyl phosphate group from 5-phosphoribose 1-diphosphate to orotate, leading to the formation of orotidine monophosphate (OMP). This chain is Orotate phosphoribosyltransferase (ura-5), found in Neurospora crassa (strain ATCC 24698 / 74-OR23-1A / CBS 708.71 / DSM 1257 / FGSC 987).